We begin with the raw amino-acid sequence, 82 residues long: Leucinostatins biosynthesis cluster protein M (82 aa).

The interval 34-82 is disordered; it reads ARNETHDPSGPRAPVSSMRLGPRSRPYHHGTARLRGSPNCSRDSSSAAT. The segment covering 71 to 82 has biased composition (polar residues); sequence PNCSRDSSSAAT.

In terms of biological role, part of the gene cluster that mediates the biosynthesis of the lipopeptide antibiotics leucinostatins that show extensive biological activities, including antimalarial, antiviral, antibacterial, antifungal, and antitumor activities, as well as phytotoxic. The function of lcsM within the leucinostatins biosynthesis has not been identified yet. The chain is Leucinostatins biosynthesis cluster protein M from Purpureocillium lilacinum (Paecilomyces lilacinus).